Reading from the N-terminus, the 358-residue chain is Trace amine-associated receptor 7f (358 aa).

The Extracellular portion of the chain corresponds to 1–47 (MSIADETVSWNQDSILSRDLFSATSAELCYENLNRSCVRSPYSPGPR). Residue asparagine 34 is glycosylated (N-linked (GlcNAc...) asparagine). 2 cysteine pairs are disulfide-bonded: cysteine 37–cysteine 201 and cysteine 120–cysteine 205. Residues 48 to 68 (LILYAVFGFGAVLAVCGNLLV) traverse the membrane as a helical segment. Residues 69–83 (MTSILHFRQLHSPAN) are Cytoplasmic-facing. Residues 84–104 (FLVASLACADFLVGVMVMPFS) form a helical membrane-spanning segment. Topologically, residues 105 to 121 (MVRSVEGCWYFGDSYCK) are extracellular. Residues 122-143 (LHTCFDVSFCYCSLFHLCFISV) traverse the membrane as a helical segment. The Cytoplasmic segment spans residues 144 to 166 (DRYIAVSDPLAYPTRFTASVSGK). The chain crosses the membrane as a helical span at residues 167–187 (CITFSWLLSISYGFSLIYTGA). Over 188–212 (SEAGLEDLVSSLTCVGGCQIAVNQT) the chain is Extracellular. The N-linked (GlcNAc...) asparagine glycan is linked to asparagine 210. The helical transmembrane segment at 213–233 (WVFINFSVFLIPTLVMITVYS) threads the bilayer. Residues 234 to 274 (KIFLIAKQQAQNIEKMSKQTARASDSYKDRVAKRERKAAKT) are Cytoplasmic-facing. Residues 275-295 (LGIAVAAFLLSWLPYFIDSFI) traverse the membrane as a helical segment. The Extracellular portion of the chain corresponds to 296-309 (DAFLGFITPTYVYE). The helical transmembrane segment at 310–333 (ILVWIVYYNSAMNPLIYAFFYPWF) threads the bilayer. Topologically, residues 334 to 358 (RKAIKLTVTGKILRENSSTTNLFSE) are cytoplasmic.

It belongs to the G-protein coupled receptor 1 family. In terms of tissue distribution, specifically expressed in neurons of the olfactory epithelium.

It is found in the cell membrane. In terms of biological role, olfactory receptor activated by trace amines, such as N-methylpiperidine and N,N-dimethylcyclohexylamine. Trace amine compounds are enriched in animal body fluids and act on trace amine-associated receptors (TAARs) to elicit both intraspecific and interspecific innate behaviors. Ligand-binding causes a conformation change that triggers signaling via G(s)-class of G alpha proteins (GNAL or GNAS). The protein is Trace amine-associated receptor 7f of Mus musculus (Mouse).